Here is a 474-residue protein sequence, read N- to C-terminus: 3-isopropylmalate dehydratase large subunit (474 aa).

[4Fe-4S] cluster is bound by residues Cys350, Cys411, and Cys414.

It belongs to the aconitase/IPM isomerase family. LeuC type 1 subfamily. As to quaternary structure, heterodimer of LeuC and LeuD. Requires [4Fe-4S] cluster as cofactor.

The enzyme catalyses (2R,3S)-3-isopropylmalate = (2S)-2-isopropylmalate. The protein operates within amino-acid biosynthesis; L-leucine biosynthesis; L-leucine from 3-methyl-2-oxobutanoate: step 2/4. Functionally, catalyzes the isomerization between 2-isopropylmalate and 3-isopropylmalate, via the formation of 2-isopropylmaleate. This is 3-isopropylmalate dehydratase large subunit from Hydrogenovibrio crunogenus (strain DSM 25203 / XCL-2) (Thiomicrospira crunogena).